Consider the following 122-residue polypeptide: Flagellar protein FliT (122 aa).

The interval M1–K50 is required for homodimerization. The fliD binding stretch occupies residues I60–R98.

This sequence belongs to the FliT family. In terms of assembly, homodimer. Interacts with FliD and FlhC.

It is found in the cytoplasm. The protein localises to the cytosol. Functionally, dual-function protein that regulates the transcription of class 2 flagellar operons and that also acts as an export chaperone for the filament-capping protein FliD. As a transcriptional regulator, acts as an anti-FlhDC factor; it directly binds FlhC, thus inhibiting the binding of the FlhC/FlhD complex to class 2 promoters, resulting in decreased expression of class 2 flagellar operons. As a chaperone, effects FliD transition to the membrane by preventing its premature polymerization, and by directing it to the export apparatus. The protein is Flagellar protein FliT of Salmonella gallinarum (strain 287/91 / NCTC 13346).